A 187-amino-acid chain; its full sequence is PBAN-type neuropeptides (187 aa).

A signal peptide spans 1-22 (MSRFYFFFNLICLYLAIKSALS). Positions 23–64 (AELDTNDQKYADLRTTGRGESPDSTGPDSDTLRRDDGAEGLN) are excised as a propeptide. Residues 34 to 43 (DLRTTGRGES) are compositionally biased toward basic and acidic residues. The interval 34–58 (DLRTTGRGESPDSTGPDSDTLRRDD) is disordered. The residue at position 76 (leucine 76) is a Leucine amide. A propeptide spanning residues 80 to 127 (TIAADLHDDLVEEFDAEPLGYAGEPPQKLATELVQGAPYMVLLVTAKP) is cleaved from the precursor. Residues 132-163 (PIFYHTTSPRLGRRDSVGENHQRPPFAPRLGR) form a disordered region. Leucine 142 carries the post-translational modification Leucine amide. Over residues 143–153 (GRRDSVGENHQ) the composition is skewed to basic and acidic residues. 2 positions are modified to leucine amide: leucine 161 and leucine 171. Positions 174–187 (SYNGGYPLPFQFAY) are excised as a propeptide.

It belongs to the pyrokinin family.

It localises to the secreted. A hormone that controls sex pheromone production in females and pheromone responsiveness in male. Also mediates visceral muscle contractile activity (myotropic activity). This Anopheles gambiae (African malaria mosquito) protein is PBAN-type neuropeptides.